The chain runs to 372 residues: THAP domain-containing protein 5 (372 aa).

A THAP-type zinc finger spans residues 1–85 (MTRYCAATRC…LKPNAIPTLF (85 aa)). Residues 306 to 362 (TDRHYLRQKIAKLQSKIAVLEAQENATLSRLRLLESVIAKLKQENLLSDEKLKILEN) are a coiled coil.

The protein localises to the nucleus. The chain is THAP domain-containing protein 5 (thap5) from Xenopus laevis (African clawed frog).